Reading from the N-terminus, the 313-residue chain is DDRGK domain-containing protein 1 (313 aa).

A helical membrane pass occupies residues 1-28; sequence MVSPVVYLVVAALLVGLILFLTRGRGRA. The tract at residues 1–113 is mediates interaction with CDK5RAP3; sequence MVSPVVYLVV…IEKPVETHLS (113 aa). The Cytoplasmic segment spans residues 29–313; it reads AAAAQEPLHN…GRETPAQAPA (285 aa). The interval 40-88 is disordered; that stretch reads EVPAAAGRVARPQPLEPEEQRAAGRPRRRRDLGSRLQAQRRAQRVAWAD. Ser-73 and Ser-113 each carry phosphoserine. Residues 73–87 are compositionally biased toward low complexity; that stretch reads SRLQAQRRAQRVAWA. Residues 117–215 are mediates interaction with TRIP4; sequence GAKKLRKLEE…MTEEQSHSFL (99 aa). The tract at residues 130-185 is disordered; it reads RKAQREAEEAEREERKRLESQREAEWKKEEERLRLEEEQKEEEERKAQEEQAQREH. A UFM1-interacting motif (UFIM) motif is present at residues 194-208; that stretch reads TFVVVEEGVGETMTE. Residues 215 to 313 form a mediates interaction with UFL1 region; it reads LAEFINYIKQ…GRETPAQAPA (99 aa). The region spanning 228 to 272 is the PCI domain; it reads VLLEDLASQVGLRTQDTINRIQDLLAEGTLTGVIDDRGKFIYITP. A Glycyl lysine isopeptide (Lys-Gly) (interchain with G-Cter in UFM1) cross-link involves residue Lys-266.

This sequence belongs to the DDRGK1 family. As to quaternary structure, component of the UFM1 ribosome E3 ligase (UREL) complex, composed of UFL1, DDRGK1 and CDK5RAP3. Interacts with (unphosphorylated) ERN1/IRE1-alpha; interaction is dependent on UFM1 and takes place in response to endoplasmic reticulum stress, regulating ERN1/IRE1-alpha stability. Interacts with NFKBIA. Interacts with SOX9. In terms of processing, ubiquitinated. Ubiquitination probably triggers proteasomal degradation and is negatively regulated by UFL1, the enzyme involved in the ufmylation of DDRGK1. Ufmylated; conjugated to ubiquitin-like protein UFM1, probably at Lys-266 by UFL1. The relevance of ufmylation is however unclear: as DDRGK1 acts as a substrate adapter for ufmylation, it is uncertain whether ufmylation is a collateral effect of the ufmylation process or whether it is required to regulate its activity.

The protein resides in the endoplasmic reticulum membrane. Component of the UFM1 ribosome E3 ligase (UREL) complex, a multiprotein complex that catalyzes ufmylation of endoplasmic reticulum-docked proteins. The UREL complex plays a key role in ribosome recycling by mediating mono-ufmylation of the RPL26/uL24 subunit of the 60S ribosome following ribosome dissociation: ufmylation weakens the junction between post-termination 60S subunits and SEC61 translocons, promoting release and recycling of the large ribosomal subunit from the endoplasmic reticulum membrane. Ufmylation of RPL26/uL24 and subsequent 60S ribosome recycling either take place after normal termination of translation or after ribosome stalling during cotranslational translocation at the endoplasmic reticulum. Within the UREL complex, DDRGK1 tethers the complex to the endoplasmic reticulum membrane to restrict its activity to endoplasmic reticulum-docked ribosomes and acts as an ufmylation 'reader': following RPL26/uL24 ufmylation, DDRGK1 specifically binds to ufmylated RPL26/uL24 via its UFIM motif, resulting in stable association between the 60S ribosome and the UREL complex, followed by dissociation of the 60S ribosome subunit from the endoplasmic reticulum membrane. The UREL complex is also involved in reticulophagy in response to endoplasmic reticulum stress by promoting ufmylation of proteins such as CYB5R3 and RPN1, thereby promoting lysosomal degradation of ufmylated proteins. Ufmylation-dependent reticulophagy inhibits the unfolded protein response (UPR) by regulating ERN1/IRE1-alpha stability. Acts as a regulator of immunity by promoting differentiation of B-cells into plasma cells: acts by promoting expansion of the endoplasmic reticulum and regulating the unfolded protein response (UPR). May also be required for TRIP4 ufmylation. May play a role in NF-kappa-B-mediated transcription through regulation of the phosphorylation and the degradation of NFKBIA, the inhibitor of NF-kappa-B. Plays a role in cartilage development through SOX9, inhibiting the ubiquitin-mediated proteasomal degradation of this transcriptional regulator. Required for stabilization and ufmylation of ATG9A. The chain is DDRGK domain-containing protein 1 from Bos taurus (Bovine).